The primary structure comprises 108 residues: Mitochondrial import inner membrane translocase subunit tim-13 (108 aa).

A Twin CX3C motif motif is present at residues 45-68 (CTNKCITAPGSSLASGEKQCLQRC). Cystine bridges form between cysteine 45-cysteine 68 and cysteine 49-cysteine 64. The interval 89–108 (EEMASSGGMGGGFGQGPSFS) is disordered. The span at 95-108 (GGMGGGFGQGPSFS) shows a compositional bias: gly residues.

Belongs to the small Tim family. Heterohexamer; composed of 3 copies of tim-8/ddp-1 and 3 copies of tin-13/tim-13, named soluble 70 kDa complex. Associates with the TIM22 complex, whose core is composed of tim-22.

It localises to the mitochondrion inner membrane. Its function is as follows. Mitochondrial intermembrane chaperone that participates in the import and insertion of some multi-pass transmembrane proteins into the mitochondrial inner membrane. Also required for the transfer of beta-barrel precursors from the TOM complex to the sorting and assembly machinery (SAM complex) of the outer membrane. Acts as a chaperone-like protein that protects the hydrophobic precursors from aggregation and guide them through the mitochondrial intermembrane space. The tim-8-tim-13 complex mediates the import of some proteins while the predominant tim-9/tin-9.1-tim-10/tin-10 70 kDa complex mediates the import of much more proteins. In Caenorhabditis elegans, this protein is Mitochondrial import inner membrane translocase subunit tim-13 (tin-13).